An 85-amino-acid polypeptide reads, in one-letter code: Large ribosomal subunit protein bL27 (85 aa).

Residues 1–22 (MAHKKAGGSTRNGRDSEAKRMG) are disordered.

It belongs to the bacterial ribosomal protein bL27 family.

This chain is Large ribosomal subunit protein bL27, found in Escherichia coli O6:K15:H31 (strain 536 / UPEC).